Consider the following 287-residue polypeptide: ATP synthase gamma chain (287 aa).

This sequence belongs to the ATPase gamma chain family. As to quaternary structure, F-type ATPases have 2 components, CF(1) - the catalytic core - and CF(0) - the membrane proton channel. CF(1) has five subunits: alpha(3), beta(3), gamma(1), delta(1), epsilon(1). CF(0) has three main subunits: a, b and c.

The protein localises to the cell inner membrane. Its function is as follows. Produces ATP from ADP in the presence of a proton gradient across the membrane. The gamma chain is believed to be important in regulating ATPase activity and the flow of protons through the CF(0) complex. In Escherichia fergusonii (strain ATCC 35469 / DSM 13698 / CCUG 18766 / IAM 14443 / JCM 21226 / LMG 7866 / NBRC 102419 / NCTC 12128 / CDC 0568-73), this protein is ATP synthase gamma chain.